The following is a 523-amino-acid chain: Putative glycerol-3-phosphate transporter 1 (523 aa).

The next 12 helical transmembrane spans lie at 29–49, 102–122, 133–153, 163–183, 196–216, 228–248, 306–326, 344–364, 368–388, 402–422, 444–464, and 468–488; these read LSYSAYQAIVLIVTFLAYASY, VLLGEIDVAFLAVYAFGMYFA, IFLTVGMIGTGLFTSLFGVGY, FLIMQMLAGLFQSSGWPSVVA, LIMGIWNAHTSVGNITGSLIA, FVVPGVIIVVIGLVNYAFLPV, FALCLFFAKLVAYTFLYWLPF, GNLSTMFDVGGVVGGIMAGYI, IGARAITAASFMYCSIPALFF, SLMFLTGMLVNGPYALITTAV, AIIDGTGSVGAAVGPLLTGYI, and GSWTAVFTMLMGAAFVAGLLL.

This sequence belongs to the major facilitator superfamily. Organophosphate:Pi antiporter (OPA) (TC 2.A.1.4) family.

It localises to the membrane. This Arabidopsis thaliana (Mouse-ear cress) protein is Putative glycerol-3-phosphate transporter 1.